Consider the following 483-residue polypeptide: V-type proton ATPase subunit H (483 aa).

Serine 59 and serine 483 each carry phosphoserine.

The protein belongs to the V-ATPase H subunit family. V-ATPase is a heteromultimeric enzyme made up of two complexes: the ATP-hydrolytic V1 complex and the proton translocation V0 complex. The V1 complex consists of three catalytic AB heterodimers that form a heterohexamer, three peripheral stalks each consisting of EG heterodimers, one central rotor including subunits D and F, and the regulatory subunits C and H. The proton translocation complex V0 consists of the proton transport subunit a, a ring of proteolipid subunits c9c'', rotary subunit d, subunits e and f, and the accessory subunits ATP6AP1/Ac45 and ATP6AP2/PRR. Interacts with AP2M1.

The protein localises to the cytoplasmic vesicle. The protein resides in the clathrin-coated vesicle membrane. Its function is as follows. Subunit of the V1 complex of vacuolar(H+)-ATPase (V-ATPase), a multisubunit enzyme composed of a peripheral complex (V1) that hydrolyzes ATP and a membrane integral complex (V0) that translocates protons. V-ATPase is responsible for acidifying and maintaining the pH of intracellular compartments and in some cell types, is targeted to the plasma membrane, where it is responsible for acidifying the extracellular environment. Subunit H is essential for V-ATPase activity, but not for the assembly of the complex. Involved in the endocytosis mediated by clathrin-coated pits, required for the formation of endosomes. The sequence is that of V-type proton ATPase subunit H (Atp6v1h) from Mus musculus (Mouse).